Reading from the N-terminus, the 38-residue chain is Photosystem II reaction center protein X (38 aa).

The helical transmembrane segment at 9–29 (IASLFAGAFIALAIGGVLVFI) threads the bilayer.

It belongs to the PsbX family. Type 1 subfamily. In terms of assembly, PSII is composed of 1 copy each of membrane proteins PsbA, PsbB, PsbC, PsbD, PsbE, PsbF, PsbH, PsbI, PsbJ, PsbK, PsbL, PsbM, PsbT, PsbX, PsbY, PsbZ, Psb30/Ycf12, at least 3 peripheral proteins of the oxygen-evolving complex and a large number of cofactors. It forms dimeric complexes.

The protein resides in the plastid. Its subcellular location is the chloroplast thylakoid membrane. Functionally, involved in the binding and/or turnover of quinones at the Q(B) site of photosystem II (PSII). PSII is a light-driven water plastoquinone oxidoreductase, using light energy to abstract electrons from H(2)O, generating a proton gradient subsequently used for ATP formation. This Phaeodactylum tricornutum (strain CCAP 1055/1) protein is Photosystem II reaction center protein X.